Reading from the N-terminus, the 246-residue chain is 5-oxoprolinase subunit A (246 aa).

The protein belongs to the LamB/PxpA family. As to quaternary structure, forms a complex composed of PxpA, PxpB and PxpC.

It carries out the reaction 5-oxo-L-proline + ATP + 2 H2O = L-glutamate + ADP + phosphate + H(+). Its function is as follows. Catalyzes the cleavage of 5-oxoproline to form L-glutamate coupled to the hydrolysis of ATP to ADP and inorganic phosphate. This chain is 5-oxoprolinase subunit A, found in Vibrio cholerae serotype O1 (strain M66-2).